The sequence spans 795 residues: Phenylalanine--tRNA ligase beta subunit (795 aa).

A tRNA-binding domain is found at 39–149 (SGEFSGVVVA…ADAPIGVDIR (111 aa)). The B5 domain maps to 402 to 477 (PKQPIIRLRR…RIYGYNRIPN (76 aa)). Mg(2+)-binding residues include Asp-455, Asp-461, Glu-464, and Glu-465. The FDX-ACB domain occupies 701–794 (SKFPANNRDI…LAQRFQASLR (94 aa)).

Belongs to the phenylalanyl-tRNA synthetase beta subunit family. Type 1 subfamily. As to quaternary structure, tetramer of two alpha and two beta subunits. The cofactor is Mg(2+).

Its subcellular location is the cytoplasm. The enzyme catalyses tRNA(Phe) + L-phenylalanine + ATP = L-phenylalanyl-tRNA(Phe) + AMP + diphosphate + H(+). The polypeptide is Phenylalanine--tRNA ligase beta subunit (Haemophilus ducreyi (strain 35000HP / ATCC 700724)).